Consider the following 463-residue polypeptide: Asparagine--tRNA ligase (463 aa).

It belongs to the class-II aminoacyl-tRNA synthetase family. Homodimer.

It is found in the cytoplasm. It catalyses the reaction tRNA(Asn) + L-asparagine + ATP = L-asparaginyl-tRNA(Asn) + AMP + diphosphate + H(+). In Clostridium kluyveri (strain ATCC 8527 / DSM 555 / NBRC 12016 / NCIMB 10680 / K1), this protein is Asparagine--tRNA ligase.